The following is a 392-amino-acid chain: Bone morphogenetic protein 15 (392 aa).

A signal peptide spans 1–18 (MVLLSILRILFLCELVLF). Residues 19–267 (MEHRAQMAEG…ERESLLRRTR (249 aa)) constitute a propeptide that is removed on maturation. N-linked (GlcNAc...) asparagine glycans are attached at residues N87, N147, and N237. At Q268 the chain carries Pyrrolidone carboxylic acid; in P16 and P17. S273 bears the Phosphoserine; in P16 mark. Residue T277 is glycosylated (O-linked (HexNAc...) threonine; in P17). Cystine bridges form between C291-C357, C320-C389, and C324-C391. Residue N373 is glycosylated (N-linked (GlcNAc...) asparagine).

It belongs to the TGF-beta family. As to quaternary structure, homodimer. But, in contrast to other members of this family, cannot be disulfide-linked.

Its subcellular location is the secreted. Its function is as follows. May be involved in follicular development. Oocyte-specific growth/differentiation factor that stimulates folliculogenesis and granulosa cell (GC) growth. This chain is Bone morphogenetic protein 15 (BMP15), found in Homo sapiens (Human).